We begin with the raw amino-acid sequence, 175 residues long: ADP-ribosylation factor 6 (175 aa).

Gly-2 carries the N-myristoyl glycine lipid modification. Lys-3 is lipidated: N6-myristoyl lysine. GTP-binding positions include 23 to 28 (AAGKTT), 41 to 44 (TIPT), 63 to 67 (DVGGQ), 122 to 125 (NKQD), and 155 to 156 (CA).

This sequence belongs to the small GTPase superfamily. Arf family.

The protein localises to the cytoplasm. It localises to the cytosol. The protein resides in the cell membrane. Its subcellular location is the endosome membrane. It is found in the recycling endosome membrane. The protein localises to the cell projection. It localises to the filopodium membrane. The protein resides in the ruffle. Its subcellular location is the cleavage furrow. It is found in the midbody. The protein localises to the midbody ring. It localises to the golgi apparatus. The enzyme catalyses GTP + H2O = GDP + phosphate + H(+). Functionally, GTP-binding protein involved in protein trafficking; regulates endocytic recycling and cytoskeleton remodeling. May modulate vesicle budding and uncoating within the Golgi apparatus. May contribute to the regulation of dendritic branching, filopodia extension and dendritic spine development. This Xenopus laevis (African clawed frog) protein is ADP-ribosylation factor 6 (arf6).